The sequence spans 39 residues: Contryphan-Cal2 (39 aa).

The signal sequence occupies residues 1-20 (MTRTAVLLLTLLFLVAMAAS). Cysteine 29 and cysteine 35 are disulfide-bonded.

Expressed by the venom duct.

It is found in the secreted. In terms of biological role, probable neurotoxin. This is Contryphan-Cal2 from Californiconus californicus (California cone).